We begin with the raw amino-acid sequence, 949 residues long: Sensor histidine kinase RcsC (949 aa).

The Cytoplasmic segment spans residues 1–19; the sequence is MKYLASFRTTLKASRYMFR. The chain crosses the membrane as a helical span at residues 20–41; sequence ALALVLWLLIAFSSVFYIVNAL. Residues 42-313 lie on the Periplasmic side of the membrane; sequence HQRESEIRQE…PVDKVLERIR (272 aa). A helical transmembrane segment spans residues 314 to 335; that stretch reads MVILNAILLNVLAGAALFTLAR. Over 336 to 949 the chain is Cytoplasmic; that stretch reads MYERRIFIPA…AERVRKSRES (614 aa). Residues 357 to 425 enclose the PAS domain; that stretch reads QFNRKIVASA…VLTSNNTNLQ (69 aa). The Histidine kinase domain occupies 476-692; it reads TVSHELRTPL…QFTVRIPLYG (217 aa). Position 479 is a phosphohistidine; by autocatalysis (H479). Residues 705–805 form the ABL domain; sequence SGKRCWLAVR…ARIYLIEMES (101 aa). The region spanning 826–940 is the Response regulatory domain; sequence MILVVDDHPI…VIKQTLTVYA (115 aa). The residue at position 875 (D875) is a 4-aspartylphosphate.

This sequence belongs to the RcsC family. As to quaternary structure, interacts with RcsD. Post-translationally, autophosphorylated. Activation probably requires a transfer of a phosphate group from a His in the transmitter domain to an Asp in the receiver domain.

Its subcellular location is the cell inner membrane. It carries out the reaction ATP + protein L-histidine = ADP + protein N-phospho-L-histidine.. Its function is as follows. Component of the Rcs signaling system, which controls transcription of numerous genes. RcsC functions as a membrane-associated protein kinase that phosphorylates RcsD in response to environmental signals. The phosphoryl group is then transferred to the response regulator RcsB. Involved in regulation of K30 capsular polysaccharide synthesis. This Escherichia coli protein is Sensor histidine kinase RcsC.